The primary structure comprises 123 residues: uncharacterized protein (123 aa).

The signal sequence occupies residues 1–19; that stretch reads MKIKYFFIPLFSSAILFSA. C20 carries the N-palmitoyl cysteine lipid modification. Residue C20 is the site of S-diacylglycerol cysteine attachment.

It belongs to the MG439/MG440 family.

It localises to the cell membrane. This is an uncharacterized protein from Mycoplasma pneumoniae (strain ATCC 29342 / M129 / Subtype 1) (Mycoplasmoides pneumoniae).